The chain runs to 247 residues: Acetoacetate decarboxylase 1 (247 aa).

Catalysis depends on Lys116, which acts as the Schiff-base intermediate with acetoacetate.

The protein belongs to the ADC family.

The catalysed reaction is acetoacetate + H(+) = acetone + CO2. Catalyzes the conversion of acetoacetate to acetone and carbon dioxide. This chain is Acetoacetate decarboxylase 1, found in Mesorhizobium japonicum (strain LMG 29417 / CECT 9101 / MAFF 303099) (Mesorhizobium loti (strain MAFF 303099)).